The following is a 789-amino-acid chain: Ribosomal protein S6 kinase alpha-5 (789 aa).

Residues 39–308 (FELLKVLGTG…ADEIKQHPFF (270 aa)) enclose the Protein kinase 1 domain. ATP contacts are provided by residues 45 to 53 (LGTGAYGKV) and Lys-71. Asp-167 functions as the Proton acceptor in the catalytic mechanism. Phosphoserine; by autocatalysis is present on Ser-202. The AGC-kinase C-terminal domain occupies 309-377 (QNINWDDLAA…VAPSILFKRN (69 aa)). Ser-350 carries the phosphoserine modification. A phosphoserine; by autocatalysis mark is found at Ser-366 and Ser-371. Positions 416–677 (DLKEKPLGEG…MSSLRYNEWL (262 aa)) constitute a Protein kinase 2 domain. Residues 422–430 (LGEGSFSIC) and Lys-445 contribute to the ATP site. The active-site Proton acceptor is Asp-534. Phosphothreonine occurs at positions 571 and 690. The tract at residues 731–789 (AKRRKMKKTSTSTETRSSSSESSHSSSSHSHGKTTPTKTLQPTNPTDSNNPETIFQFSD) is disordered. Residues 739 to 769 (TSTSTETRSSSSESSHSSSSHSHGKTTPTKT) show a composition bias toward low complexity. Residues Ser-740, Ser-742, and Ser-748 each carry the phosphoserine; by autocatalysis modification. Residues 770-789 (LQPTNPTDSNNPETIFQFSD) are compositionally biased toward polar residues.

This sequence belongs to the protein kinase superfamily. AGC Ser/Thr protein kinase family. S6 kinase subfamily. Mg(2+) serves as cofactor. In terms of processing, ser-366 and Thr-571 phosphorylation is required for kinase activity. Ser-366 and Ser-202 are autophosphorylated by the C-terminal kinase domain, and their phosphorylation is essential for the catalytic activity of the N-terminal kinase domain. Phosphorylated at Ser-350, Thr-571 and Thr-690 by MAP kinases. Autophosphorylated at Ser-740, Ser-742 and Ser-748 by the N-terminal kinase domain. As to expression, widely expressed with high levels in heart, brain and placenta. Less abundant in lung, kidney and liver.

It is found in the nucleus. It catalyses the reaction L-seryl-[protein] + ATP = O-phospho-L-seryl-[protein] + ADP + H(+). The enzyme catalyses L-threonyl-[protein] + ATP = O-phospho-L-threonyl-[protein] + ADP + H(+). With respect to regulation, activated by phosphorylation at Ser-350, Thr-571 and Thr-690 by MAP kinases, and by further autophosphorylation of Ser-202, Ser-366 and Ser-371 by the activated C-terminal kinase domain. The active N-terminal kinase domain finally phosphorylates downstream substrates, as well as Ser-740, Ser-742 and Ser-748 in its own C-terminal region. Its function is as follows. Serine/threonine-protein kinase that is required for the mitogen or stress-induced phosphorylation of the transcription factors CREB1 and ATF1 and that contributes to gene activation by histone phosphorylation. Phosphorylates CREB1 and ATF1 in response to mitogenic or stress stimuli such as UV-C irradiation, epidermal growth factor (EGF) and anisomycin. Directly represses transcription via phosphorylation of 'Ser-1' of histone H2A. Phosphorylates 'Ser-10' of histone H3 in response to mitogenics, stress stimuli and EGF, which results in the transcriptional activation of several immediate early genes, including proto-oncogenes c-fos/FOS and c-jun/JUN. May also phosphorylate 'Ser-28' of histone H3. Mediates the mitogen- and stress-induced phosphorylation of high mobility group protein 1 (HMGN1/HMG14). This Gallus gallus (Chicken) protein is Ribosomal protein S6 kinase alpha-5 (RPS6KA5).